Reading from the N-terminus, the 154-residue chain is Fimbrial protein (154 aa).

A propeptide spans M1–G6 (leader sequence). F7 bears the N-methylphenylalanine mark. The chain crosses the membrane as a helical span at residues F7–I27. C133 and C151 are oxidised to a cystine. Residue S154 is glycosylated (O-linked (FucNAc...) serine).

It belongs to the N-Me-Phe pilin family. As to quaternary structure, the pili are polar flexible filaments of about 5.4 nanometers diameter and 2.5 micrometers average length; they consist of only a single polypeptide chain arranged in a helical configuration of five subunits per turn in the assembled pilus. In terms of processing, O-glycosylated; glycan consists of 5NbetaOHC47NFmPse(alpha2-4)Xyl(beta1-3)FucNAc in beta1-O linkage to Ser.

Its subcellular location is the fimbrium. It localises to the membrane. This is Fimbrial protein (pilA) from Pseudomonas aeruginosa.